A 208-amino-acid chain; its full sequence is NADH-ubiquinone oxidoreductase chain 4 (208 aa).

6 helical membrane passes run 23–43 (VWIN…VTLW), 60–80 (SLSS…LLAS), 93–113 (KMYI…FSAN), 114–134 (ELIM…IIIT), 147–167 (LYFL…LISI), and 188–208 (PTWS…IKMP).

The protein belongs to the complex I subunit 4 family. Core subunit of respiratory chain NADH dehydrogenase (Complex I) which is composed of 45 different subunits.

It localises to the mitochondrion inner membrane. It catalyses the reaction a ubiquinone + NADH + 5 H(+)(in) = a ubiquinol + NAD(+) + 4 H(+)(out). Functionally, core subunit of the mitochondrial membrane respiratory chain NADH dehydrogenase (Complex I) which catalyzes electron transfer from NADH through the respiratory chain, using ubiquinone as an electron acceptor. Essential for the catalytic activity and assembly of complex I. In Phodopus sungorus (Striped hairy-footed hamster), this protein is NADH-ubiquinone oxidoreductase chain 4 (MT-ND4).